A 365-amino-acid chain; its full sequence is Quinolone epoxide rearrangement protein asqO (365 aa).

The protein belongs to the quinolone epoxide rearrangement protein penF family.

It carries out the reaction (1'E,3'E)-5-(3,3-dimethyloxiran-2-yl)-3-methylhexa-1,3-dienyl-quinolinone B = aspoquinolone A. It catalyses the reaction (1'E,3'E)-5-(3,3-dimethyloxiran-2-yl)-3-methylhexa-1,3-dienyl-quinolinone B = aspoquinolone B. It participates in secondary metabolite biosynthesis. It functions in the pathway alkaloid biosynthesis. Its pathway is mycotoxin biosynthesis. Quinolone epoxide rearrangement protein; part of the gene cluster that mediates the biosynthesis of the aspoquinolone mycotoxins. Within the pathway, asqO catalyzes an enzymatic 3-exo-tet cyclization to yield the cyclopropyl-THF ring system in aspoquinolone. The first step of the pathway is catalyzed by the nonribosomal peptide synthetase asqK that condenses anthranilic acid and O-methyl-L-tyrosine to produce 4'-methoxycyclopeptin. 4'-methoxycyclopeptin is then converted to 4'-methoxydehydrocyclopeptin by the ketoglutarate-dependent dioxygenase asqJ. AsqJ also converts its first product 4'-methoxydehydrocyclopeptin to 4'-methoxycyclopenin. The following conversion of 4'-methoxycyclopenin into 4'-methoxyviridicatin is catalyzed by the cyclopenase asqI. 4'-methoxyviridicatin is the precursor of quinolone natural products, and is further converted to quinolinone B. The prenyltransferase asqH1 then catalyzes the canonical Friedel-Crafts alkylation of quinolinone B with dimethylallyl cation to yield dimethylallyl quinolone, which is subjected to FAD-dependent dehydrogenation by the FAD-linked oxidoreductase asqF to yield conjugated aryl diene. The delta(3') double bond then serves as the site of the second alkylation with DMAPP catalyzed by the prenyltransferase asqH2 to yield a carbenium ion intermediate, which can be attacked by H(2)O to yield a styrenyl quinolone containing a C3'-hydroxyprenyl chain. The FAD-dependent monooxygenase asqG performs epoxidation of the terminal C7'-C8' olefin. Finally, after dehydratation of the epoxide at C3 by asqC, the quinolone epoxide rearrangement protein asqO catalyzes an enzymatic 3-exo-tet cyclization to yield the cyclopropyl-THF ring system in aspoquinolone. This chain is Quinolone epoxide rearrangement protein asqO, found in Emericella nidulans (strain FGSC A4 / ATCC 38163 / CBS 112.46 / NRRL 194 / M139) (Aspergillus nidulans).